A 476-amino-acid chain; its full sequence is MTNEINSATVTQDEVIKWSREAQSTLEKTQKICTDAQSSMQKTAQELTILIPDKLQAIEFLFKSYREQYDSILKQIETTKIYLHTNIDKVFNDIKDLLDPSLARLNNILLELKKTRVPSIVVEGTSEGKTLFDFTSIQSINLLKENIGIFKSNCSKIKNLLDLEVKEKLNIEQDRMNSRWNKSVKMYDLIAPLQLELRALIHGASNESNSFMGTILRENQALENELVSILEMQTNHFDQCMKAVELISSGNGCDMNLGVLKNDAQELPEVFKELTTIYDIILRNEERSKKFLATHMPNIEKISDIVKEELAVFRKFKTEEIPRYTFLIAECENKLKECSMPVKSDQSPSQVYTQTLQELTEHYVKFINIYKTKYLAELHHQQFTYPRKFLKKLTEFLNEDIYRIQIEESERRRQWTSRYGEFIPSEFKLPGEHELPVIVQIITEGLEYIQKEDGQEEEPNIGNEKELMDMITGSNK.

The protein belongs to the ATG17 family.

Its subcellular location is the cytoplasm. The protein resides in the preautophagosomal structure membrane. Its function is as follows. Autophagy-specific protein that functions in response to autophagy-inducing signals as a scaffold to recruit other ATG proteins to organize pre-autophagosomal structure (PAS) formation. Modulates the timing and magnitude of the autophagy response, such as the size of the sequestering vesicles. Plays particularly a role in pexophagy and nucleophagy. The protein is Autophagy-related protein 17 (ATG17) of Candida albicans (strain SC5314 / ATCC MYA-2876) (Yeast).